The sequence spans 201 residues: Recombination protein RecR (201 aa).

Residues 56 to 71 (CKICFNVSSDEVCQYC) form a C4-type zinc finger. The 96-residue stretch at 79 to 174 (SMICVVEESK…TVSRLASGLP (96 aa)) folds into the Toprim domain.

The protein belongs to the RecR family.

Functionally, may play a role in DNA repair. It seems to be involved in an RecBC-independent recombinational process of DNA repair. It may act with RecF and RecO. In Cutibacterium acnes (strain DSM 16379 / KPA171202) (Propionibacterium acnes), this protein is Recombination protein RecR.